The following is a 1170-amino-acid chain: PAN2-PAN3 deadenylation complex catalytic subunit PAN2 (1170 aa).

WD repeat units follow at residues 104-144 (ENMK…IIKQ) and 280-319 (NISS…HFTD). The interval 319–458 (DMAIPIELPE…DPNEIESLKP (140 aa)) is linker. Residues 399–459 (RRNQVEDTRN…PNEIESLKPE (61 aa)) form a disordered region. The segment covering 443 to 452 (VDQEPEDPNE) has biased composition (acidic residues). The USP domain maps to 459–846 (EAPPLYRNLE…MPAVLLFQIK (388 aa)). In terms of domain architecture, Exonuclease spans 894–1067 (VALDTEFVSL…EDARTALKLY (174 aa)). Residues Asp-897, Glu-899, Asp-1006, and Asp-1059 each coordinate a divalent metal cation. The segment at 1094-1170 (NFKPPRREDR…PSKASSPLPK (77 aa)) is disordered. Positions 1098–1108 (PRREDREKELQ) are enriched in basic and acidic residues. The segment covering 1109 to 1119 (RQSTPPNSTAP) has biased composition (polar residues).

Belongs to the peptidase C19 family. PAN2 subfamily. Forms a heterotrimer with an asymmetric homodimer of the regulatory subunit PAN3 to form the poly(A)-nuclease (PAN) deadenylation complex. The cofactor is a divalent metal cation.

The protein resides in the cytoplasm. The catalysed reaction is Exonucleolytic cleavage of poly(A) to 5'-AMP.. With respect to regulation, positively regulated by the regulatory subunit PAN3. In terms of biological role, catalytic subunit of the poly(A)-nuclease (PAN) deadenylation complex, one of two cytoplasmic mRNA deadenylases involved in mRNA turnover. PAN specifically shortens poly(A) tails of RNA and the activity is stimulated by poly(A)-binding protein PAB1. PAN deadenylation is followed by rapid degradation of the shortened mRNA tails by the CCR4-NOT complex. Deadenylated mRNAs are then degraded by two alternative mechanisms, namely exosome-mediated 3'-5' exonucleolytic degradation, or deadenylation-dependent mRNA decaping and subsequent 5'-3' exonucleolytic degradation by XRN1. May also be involved in post-transcriptional maturation of mRNA poly(A) tails. In Chaetomium thermophilum (strain DSM 1495 / CBS 144.50 / IMI 039719) (Thermochaetoides thermophila), this protein is PAN2-PAN3 deadenylation complex catalytic subunit PAN2.